The chain runs to 402 residues: uncharacterized protein (402 aa).

A run of 12 helical transmembrane segments spans residues 23–43 (IVSVVMFTFIGYLTIGIPLAV), 52–72 (LGYGSVLAGLVISLQYLATLL), 90–110 (VLYGMAGSAASGLFMLLSVAI), 121–141 (LLVGRLVLGAAESLVGSAAIG), 158–178 (WNGIASYGAIALGAPLGVLLV), 180–200 (WLGLWSMGASIVLLGALGFAL), 228–248 (GMGLALGAIGFGTIATFITLY), 255–275 (ANAVLCLSAFGGCFIGARLLF), 282–302 (LGGFRVAIICLGVESLGLLLL), 309–329 (WVGLAGAALTGFGFSLVFPAF), 351–371 (LFVDLSLGITGPLVGFVANLF), and 375–395 (SMFLFACLASLSGLALAIALH).

It belongs to the major facilitator superfamily. YhhS family.

It is found in the cell inner membrane. This is an uncharacterized protein from Pseudomonas aeruginosa (strain UCBPP-PA14).